The following is a 513-amino-acid chain: GMP synthase [glutamine-hydrolyzing] (513 aa).

In terms of domain architecture, Glutamine amidotransferase type-1 spans 8–198 (KIIVLDYGSQ…ALNICGAKGN (191 aa)). Residue C85 is the Nucleophile of the active site. Catalysis depends on residues H172 and E174. Residues 199-388 (WSMENFIDMQ…LGMPDEIVWR (190 aa)) enclose the GMPS ATP-PPase domain. 226–232 (SGGVDSS) contributes to the ATP binding site.

Homodimer.

The enzyme catalyses XMP + L-glutamine + ATP + H2O = GMP + L-glutamate + AMP + diphosphate + 2 H(+). It functions in the pathway purine metabolism; GMP biosynthesis; GMP from XMP (L-Gln route): step 1/1. Its function is as follows. Catalyzes the synthesis of GMP from XMP. The chain is GMP synthase [glutamine-hydrolyzing] (guaA) from Lactococcus lactis subsp. cremoris (strain MG1363).